We begin with the raw amino-acid sequence, 91 residues long: DNA-binding protein HU (91 aa).

This sequence belongs to the bacterial histone-like protein family.

Functionally, histone-like DNA-binding protein which is capable of wrapping DNA to stabilize it, and thus to prevent its denaturation under extreme environmental conditions. This Clostridium pasteurianum protein is DNA-binding protein HU (hup).